A 160-amino-acid polypeptide reads, in one-letter code: uncharacterized protein (160 aa).

The RING-type zinc-finger motif lies at 8–46; the sequence is CAVCLDFFVEPCIIECGHSYCRFCIESHLNINEKCPLCR.

This is an uncharacterized protein from Caenorhabditis elegans.